A 260-amino-acid chain; its full sequence is CD40 ligand (260 aa).

Residues methionine 1–lysine 22 lie on the Cytoplasmic side of the membrane. Residues isoleucine 23–leucine 46 traverse the membrane as a helical; Signal-anchor for type II membrane protein segment. Residues histidine 47–leucine 260 lie on the Extracellular side of the membrane. The 140-residue stretch at valine 121–leucine 260 folds into the THD domain. The cysteines at positions 177 and 217 are disulfide-linked. Asparagine 239 is a glycosylation site (N-linked (GlcNAc...) asparagine).

The protein belongs to the tumor necrosis factor family. In terms of assembly, homotrimer. Interacts with CD28. CD40 ligand, soluble form: Exists as either a monomer or a homotrimer. Forms a ternary complex between CD40 and integrins for CD40-CD40LG signaling. In terms of processing, the soluble form derives from the membrane form by proteolytic processing.

The protein resides in the cell membrane. It localises to the cell surface. It is found in the secreted. Cytokine that acts as a ligand to CD40/TNFRSF5. Costimulates T-cell proliferation and cytokine production. Its cross-linking on T-cells generates a costimulatory signal which enhances the production of IL4 and IL10 in conjunction with the TCR/CD3 ligation and CD28 costimulation. Induces the activation of NF-kappa-B. Induces the activation of kinases MAPK8 and PAK2 in T-cells. Mediates B-cell proliferation in the absence of co-stimulus as well as IgE production in the presence of IL4. Involved in immunoglobulin class switching. Its function is as follows. Acts as a ligand for integrins, specifically ITGA5:ITGB1 and ITGAV:ITGB3; both integrins and the CD40 receptor are required for activation of CD40-CD40LG signaling, which have cell-type dependent effects, such as B-cell activation, NF-kappa-B signaling and anti-apoptotic signaling. This Felis catus (Cat) protein is CD40 ligand (CD40LG).